The chain runs to 153 residues: MNATKFVVLLVISVLCAIVTARHVEEVSKETKLGTSLPKSTTKGIGAQLSAAGITSSSSDVYSSATGFNNPKGPDANAYENGYTSTSGQVIAKGRKARVSSASASTAKGDAKAAVTRKAAAARANGKVASASRVKGSSEKKKGKGKKGKGKKD.

The first 21 residues, Met-1–Ala-21, serve as a signal peptide directing secretion. 2 disordered regions span residues Ser-63–Gly-82 and Ala-122–Asp-153. Residues Ala-122–Ser-132 are compositionally biased toward low complexity. A compositionally biased stretch (basic residues) spans Lys-141–Asp-153.

The protein belongs to the UPF0540 family.

This is UPF0540 protein At1g62220 from Arabidopsis thaliana (Mouse-ear cress).